The chain runs to 373 residues: Secondary metabolism regulator laeA (373 aa).

2 disordered regions span residues 1-21 (MFLNGQGGQRPPTVASPPLNV) and 53-81 (AAERDPAAGRWHANGSPSINSTSSKNPDR). The segment covering 67 to 77 (GSPSINSTSSK) has biased composition (polar residues).

It belongs to the methyltransferase superfamily. LaeA methyltransferase family. Component of the heterotrimeric velvet complex composed of laeA, veA and velB; VeA acting as a bridging protein between laeA and velB.

It localises to the nucleus. It carries out the reaction L-methionyl-[protein] + S-adenosyl-L-methionine = S-methyl-L-methionyl-[protein] + S-adenosyl-L-homocysteine. Functionally, methyltransferase that performs automethylation. No other methyl-accepting substrate has been identified yet. Component of the velvet transcription factor complex that acts as a global regulator for secondary metabolite gene expression. Controls the expression of the cyclopiazonic acid (CPA) gene clusters. Regulates also pigmentation and conidial head morphology. This chain is Secondary metabolism regulator laeA, found in Aspergillus fumisynnematus.